Here is a 208-residue protein sequence, read N- to C-terminus: Small ribosomal subunit protein uS4 (208 aa).

Positions 98-163 (SRLDNVVYRA…LTPFVIARAV (66 aa)) constitute an S4 RNA-binding domain.

Belongs to the universal ribosomal protein uS4 family. As to quaternary structure, part of the 30S ribosomal subunit. Contacts protein S5. The interaction surface between S4 and S5 is involved in control of translational fidelity.

Its function is as follows. One of the primary rRNA binding proteins, it binds directly to 16S rRNA where it nucleates assembly of the body of the 30S subunit. Functionally, with S5 and S12 plays an important role in translational accuracy. The chain is Small ribosomal subunit protein uS4 from Acidothermus cellulolyticus (strain ATCC 43068 / DSM 8971 / 11B).